We begin with the raw amino-acid sequence, 448 residues long: MREIVHLQTGQCGNQIGAAFWQTISGEHGLDGSGVYNGSSDLQLERMNVYFNEASGNKYVPRAVLVDLEPGTMDAVRAGPFGQLFRPDNFVFGQSGAGNNWAKGHYTEGAELVDQVVDVVRREAEGCDCLQGFQITHSLGGGTGAGMGTLLISKIREEFPDRMMATYSVVPSPKVSDTVVEPYNATLSVHQLVEHSDETFCIDNEALYDICMRTLKLSNPSYGDLNHLVSAVMSGVTTCLRFPGQLNSDLRKLAVNMVPFPRLHFFMVGFAPLTSRGAHSFRAVSVPELTQQMFDPKNMMAASDFRNGRYLTCSAIFRGKVSMKEVEDQMRNIQSKNQTYFVEWIPNNIQTALCSIPPRGLKMSSTFIGNSTSIQELFKRVGDQFTAMFRRKAFLHWYTGEGMDEMEFTEAESNMNDLVSEYQQYQDASISEGEEEYLEEEEPLEHEE.

8 residues coordinate GTP: Gln11, Glu69, Ser138, Gly142, Thr143, Gly144, Asn204, and Asn226. Residue Glu69 participates in Mg(2+) binding. The interval 425–448 is disordered; that stretch reads YQDASISEGEEEYLEEEEPLEHEE. Residues 432 to 448 are compositionally biased toward acidic residues; that stretch reads EGEEEYLEEEEPLEHEE.

The protein belongs to the tubulin family. Dimer of alpha and beta chains. A typical microtubule is a hollow water-filled tube with an outer diameter of 25 nm and an inner diameter of 15 nM. Alpha-beta heterodimers associate head-to-tail to form protofilaments running lengthwise along the microtubule wall with the beta-tubulin subunit facing the microtubule plus end conferring a structural polarity. Microtubules usually have 13 protofilaments but different protofilament numbers can be found in some organisms and specialized cells. Mg(2+) is required as a cofactor.

It is found in the cytoplasm. The protein localises to the cytoskeleton. Its function is as follows. Tubulin is the major constituent of microtubules, a cylinder consisting of laterally associated linear protofilaments composed of alpha- and beta-tubulin heterodimers. Microtubules grow by the addition of GTP-tubulin dimers to the microtubule end, where a stabilizing cap forms. Below the cap, tubulin dimers are in GDP-bound state, owing to GTPase activity of alpha-tubulin. The chain is Tubulin beta chain from Aspergillus flavus.